The primary structure comprises 192 residues: Epididymal-specific lipocalin-5 (192 aa).

An N-terminal signal peptide occupies residues Met1–Gly26. A disulfide bridge connects residues Cys89 and Cys183.

The protein belongs to the calycin superfamily. Lipocalin family. 2 different forms with differently processed N-termini exist. In terms of tissue distribution, epididymal fluid of the caudal and corpus regions (at protein level).

Its subcellular location is the secreted. In terms of biological role, associates with spermatozoa in the epididymal fluid but does not bind tightly to them. Binds both all-trans and 13-cis retinoic acid. May act as a retinoid carrier protein which is required for epididymal function and/or sperm maturation. The sequence is that of Epididymal-specific lipocalin-5 from Mus musculus (Mouse).